The chain runs to 340 residues: Glutamyl-tRNA reductase (340 aa).

Substrate is bound by residues 49–52 (TCNR), Ser-108, 113–115 (ETE), and Gln-119. Catalysis depends on Cys-50, which acts as the Nucleophile. Residue 188–193 (GAGEMS) participates in NADP(+) binding.

The protein belongs to the glutamyl-tRNA reductase family. Homodimer.

It catalyses the reaction (S)-4-amino-5-oxopentanoate + tRNA(Glu) + NADP(+) = L-glutamyl-tRNA(Glu) + NADPH + H(+). It functions in the pathway porphyrin-containing compound metabolism; protoporphyrin-IX biosynthesis; 5-aminolevulinate from L-glutamyl-tRNA(Glu): step 1/2. Functionally, catalyzes the NADPH-dependent reduction of glutamyl-tRNA(Glu) to glutamate 1-semialdehyde (GSA). This chain is Glutamyl-tRNA reductase, found in Akkermansia muciniphila (strain ATCC BAA-835 / DSM 22959 / JCM 33894 / BCRC 81048 / CCUG 64013 / CIP 107961 / Muc).